The chain runs to 350 residues: Biotin synthase (350 aa).

The Radical SAM core domain maps to 54–278 (REIQLSTLLS…TMPQSYVRLS (225 aa)). [4Fe-4S] cluster contacts are provided by cysteine 69, cysteine 73, and cysteine 76. Cysteine 113, cysteine 144, cysteine 204, and arginine 276 together coordinate [2Fe-2S] cluster.

The protein belongs to the radical SAM superfamily. Biotin synthase family. As to quaternary structure, homodimer. [4Fe-4S] cluster is required as a cofactor. It depends on [2Fe-2S] cluster as a cofactor.

It catalyses the reaction (4R,5S)-dethiobiotin + (sulfur carrier)-SH + 2 reduced [2Fe-2S]-[ferredoxin] + 2 S-adenosyl-L-methionine = (sulfur carrier)-H + biotin + 2 5'-deoxyadenosine + 2 L-methionine + 2 oxidized [2Fe-2S]-[ferredoxin]. It participates in cofactor biosynthesis; biotin biosynthesis; biotin from 7,8-diaminononanoate: step 2/2. Functionally, catalyzes the conversion of dethiobiotin (DTB) to biotin by the insertion of a sulfur atom into dethiobiotin via a radical-based mechanism. This chain is Biotin synthase, found in Neisseria meningitidis serogroup B (strain ATCC BAA-335 / MC58).